The sequence spans 419 residues: Transcription termination factor Rho (419 aa).

In terms of domain architecture, Rho RNA-BD spans 48–123 (DIFGDGVLEI…LKVNAVNYDK (76 aa)). RNA-binding stretches follow at residues 61-66 (GFGFLR), 78-80 (DIY), and 108-110 (ERY). ATP-binding positions include 169-174 (GRGQRG), 181-186 (KAGKTI), and Arg212. The interval 284–288 (VLTGG) is RNA-binding 2.

It belongs to the Rho family. In terms of assembly, homohexamer. The homohexamer assembles into an open ring structure.

Its function is as follows. Facilitates transcription termination by a mechanism that involves Rho binding to the nascent RNA, activation of Rho's RNA-dependent ATPase activity, and release of the mRNA from the DNA template. This Buchnera aphidicola subsp. Schizaphis graminum (strain Sg) protein is Transcription termination factor Rho.